Reading from the N-terminus, the 268-residue chain is Single-stranded DNA-binding protein WHY3, chloroplastic (268 aa).

The N-terminal 75 residues, 1-75 (MSQLLSSPPM…KQRFGDSSSS (75 aa)), are a transit peptide targeting the chloroplast. The segment at 93 to 98 (KGKAAL) is required for ssDNA binding. The Nuclear localization signal signature appears at 171–185 (KGKGSDEGKVRKVLK).

This sequence belongs to the Whirly family. As to quaternary structure, homotetramer.

The protein localises to the plastid. Its subcellular location is the chloroplast. The protein resides in the nucleus. Single-stranded DNA-binding protein that functions in both chloroplasts and nucleus. In chloroplasts, maintains plastid genome stability by preventing break-induced and short homology-dependent illegitimate recombinations. In the nucleus, is recruited to a distal element upstream of the kinesin KP1 to mediate the transcriptional repression of KP1. Can bind double-stranded DNA in vivo. This Arabidopsis thaliana (Mouse-ear cress) protein is Single-stranded DNA-binding protein WHY3, chloroplastic (WHY3).